The sequence spans 177 residues: Probable inosine/xanthosine triphosphatase (177 aa).

Belongs to the YjjX NTPase family. In terms of assembly, homodimer. It depends on Mg(2+) as a cofactor. The cofactor is Mn(2+).

The enzyme catalyses XTP + H2O = XDP + phosphate + H(+). It carries out the reaction ITP + H2O = IDP + phosphate + H(+). Phosphatase that hydrolyzes non-canonical purine nucleotides such as XTP and ITP to their respective diphosphate derivatives. Probably excludes non-canonical purines from DNA/RNA precursor pool, thus preventing their incorporation into DNA/RNA and avoiding chromosomal lesions. The protein is Probable inosine/xanthosine triphosphatase of Pyrobaculum islandicum (strain DSM 4184 / JCM 9189 / GEO3).